Reading from the N-terminus, the 104-residue chain is Protein P3 (104 aa).

Residues 77–99 (LVFGVPQKTLLLGFGGLLVLGLV) traverse the membrane as a helical segment.

As to quaternary structure, homodimer.

The protein localises to the virion membrane. The chain is Protein P3 (III) from Pseudoalteromonas phage PM2 (Bacteriophage PM2).